Reading from the N-terminus, the 321-residue chain is Protease HtpX homolog (321 aa).

2 helical membrane-spanning segments follow: residues threonine 6–glycine 26 and glycine 28–serine 48. Histidine 130 serves as a coordination point for Zn(2+). The active site involves glutamate 131. Histidine 134 lines the Zn(2+) pocket. A run of 2 helical transmembrane segments spans residues isoleucine 145–glycine 165 and proline 173–valine 193. Glutamate 202 is a binding site for Zn(2+). The disordered stretch occupies residues glutamate 281–serine 321. Basic and acidic residues predominate over residues arginine 310–serine 321.

The protein belongs to the peptidase M48B family. The cofactor is Zn(2+).

Its subcellular location is the cell inner membrane. The polypeptide is Protease HtpX homolog (Agrobacterium fabrum (strain C58 / ATCC 33970) (Agrobacterium tumefaciens (strain C58))).